A 455-amino-acid chain; its full sequence is tRNA modification GTPase MnmE (455 aa).

Residues R26, E86, and R125 each coordinate (6S)-5-formyl-5,6,7,8-tetrahydrofolate. A TrmE-type G domain is found at 222-376 (GLKTAIIGRP…VEEKINQIFF (155 aa)). N232 contacts K(+). GTP is bound by residues 232-237 (NVGKSS), 251-257 (TDIAGTT), and 276-279 (DTAG). S236 contributes to the Mg(2+) binding site. K(+)-binding residues include T251, I253, and T256. T257 is a Mg(2+) binding site. K455 is a (6S)-5-formyl-5,6,7,8-tetrahydrofolate binding site.

Belongs to the TRAFAC class TrmE-Era-EngA-EngB-Septin-like GTPase superfamily. TrmE GTPase family. As to quaternary structure, homodimer. Heterotetramer of two MnmE and two MnmG subunits. Requires K(+) as cofactor.

The protein resides in the cytoplasm. Functionally, exhibits a very high intrinsic GTPase hydrolysis rate. Involved in the addition of a carboxymethylaminomethyl (cmnm) group at the wobble position (U34) of certain tRNAs, forming tRNA-cmnm(5)s(2)U34. This is tRNA modification GTPase MnmE from Lactococcus lactis subsp. cremoris (strain MG1363).